Consider the following 629-residue polypeptide: Hemocyanin G chain (629 aa).

H171, H175, H202, H322, H326, and H362 together coordinate Cu cation. 2 N-linked (GlcNAc...) asparagine glycosylation sites follow: N447 and N506. A disulfide bond links C534 and C582. N615 carries N-linked (GlcNAc...) asparagine glycosylation.

The protein belongs to the tyrosinase family. Hemocyanin subfamily. As to quaternary structure, tarantula hemocyanin is a 24-chain polymer with seven different chains identified. In terms of tissue distribution, hemolymph.

The protein resides in the secreted. The protein localises to the extracellular space. Its function is as follows. Hemocyanins are copper-containing oxygen carriers occurring freely dissolved in the hemolymph of many mollusks and arthropods. This chain is Hemocyanin G chain (HCG), found in Aphonopelma sp. (American tarantula).